Consider the following 266-residue polypeptide: PDZ domain-containing protein 9 (266 aa).

The PDZ domain maps to 27–109; that stretch reads KVIQTKLTVG…GTVLQIKAYR (83 aa).

This Mus musculus (Mouse) protein is PDZ domain-containing protein 9 (Pdzd9).